A 320-amino-acid chain; its full sequence is Putative malonate transporter (320 aa).

The next 8 membrane-spanning stretches (helical) occupy residues 1–21 (MAEI…GYLT), 32–52 (MGWL…FKLV), 65–85 (FILT…AIGL), 113–133 (GLAL…IFCF), 167–187 (IAFH…FLSF), 196–216 (LIDY…GVTL), 256–276 (IWVQ…VFVI), and 289–309 (ATIL…LYLI).

Belongs to the auxin efflux carrier (TC 2.A.69) family.

Its subcellular location is the cell membrane. The sequence is that of Putative malonate transporter (mdcF) from Rhizobium meliloti (strain 1021) (Ensifer meliloti).